Reading from the N-terminus, the 278-residue chain is HTH-type transcriptional activator RhaS (278 aa).

The HTH araC/xylS-type domain occupies 174 to 272 (NLLLAWLEDH…NWSPRDIRQG (99 aa)). 2 DNA-binding regions (H-T-H motif) span residues 191–212 (DAVA…KQQT) and 239–262 (VTDI…RREF).

As to quaternary structure, binds DNA as a dimer.

The protein localises to the cytoplasm. Its function is as follows. Activates expression of the rhaBAD and rhaT operons. This chain is HTH-type transcriptional activator RhaS, found in Escherichia coli O6:H1 (strain CFT073 / ATCC 700928 / UPEC).